We begin with the raw amino-acid sequence, 203 residues long: Sarcosine oxidase subunit gamma (203 aa).

Belongs to the SoxG family. In terms of assembly, heterotetramer composed of subunits alpha (SoxA), beta (SoxB), gamma (SoxG) and delta (SoxD).

It is found in the cytoplasm. The enzyme catalyses sarcosine + (6S)-5,6,7,8-tetrahydrofolate + O2 = (6R)-5,10-methylene-5,6,7,8-tetrahydrofolate + glycine + H2O2. It catalyses the reaction sarcosine + O2 + H2O = formaldehyde + glycine + H2O2. In the presence of tetrahydrofolate, catalyzes the oxidative demethylation of sarcosine to yield glycine, 5,10-methylenetetrahydrofolate and hydrogen peroxide. In the absence of tetrahydrofolate, catalyzes the oxidative demethylation of sarcosine to yield glycine, formaldehyde and hydrogen peroxide. The polypeptide is Sarcosine oxidase subunit gamma (soxG) (Arthrobacter sp).